The following is an 890-amino-acid chain: UPF0182 protein Ppro_2689 (890 aa).

Helical transmembrane passes span 6–26, 50–70, 102–122, 157–177, 200–220, 244–264, and 266–286; these read FILI…LLAF, AGSG…NLLL, LGIP…AMQW, TITA…VLVY, LAIL…LDCF, TYRI…IGLW, and GAWR…VIGI.

This sequence belongs to the UPF0182 family.

It localises to the cell membrane. The chain is UPF0182 protein Ppro_2689 from Pelobacter propionicus (strain DSM 2379 / NBRC 103807 / OttBd1).